Reading from the N-terminus, the 1193-residue chain is Dynamin-like protein A (1193 aa).

Residues 1–609 are D1, associates with and fuses membranes, tethers lipsomes; sequence MTDQNRKELL…AFRERVKRLE (609 aa). The tract at residues 50 to 57 is G1 motif D1; sequence GHYSAGKS. The G2 motif D1 stretch occupies residues 76–78; the sequence is TSA. Positions 141–144 are G3 motif D1; that stretch reads DTPG. Residues 199–202 form a G4 motif D1 region; it reads NQID. Residues 561–1193 are D2, does not associate with membranes; it reads MPKSEIKMEQ…WKNSDNTIKM (633 aa). The interval 619-626 is G1 motif D2; sequence GGFSSGKS. A G2 motif D2 region spans residues 645–647; it reads TTA. The tract at residues 774–777 is G3 motif D2; sequence DTPG. The segment at 837–840 is G4 motif D2; that stretch reads NAAD.

This sequence belongs to the TRAFAC class dynamin-like GTPase superfamily. Dynamin/Fzo/YdjA family. As to quaternary structure, homodimer in solution. Both D1 and D2 domains interact with YwpG, YneK interacts only with D1 while RNase Y (rny) only interacts with whole protein. Probably oligomerizes at damaged membrane sites. Requires Mg(2+) as cofactor.

It is found in the cell membrane. It carries out the reaction GTP + H2O = GDP + phosphate + H(+). Its function is as follows. Mediates lipid mixing of vesicles and full mixing of their contents in the absence and presence of GTP. Tethers and mixes small vesicles better than larger ones, indicating a curvature preference. GTP slows down DynA-mediated lipid fusion, perhaps controlling its activity. Prefers phospholipid composition close to the B.subtilis membrane; requires phosphatidylglycerol for fusion has no activity on pure phosphatidylethanolamine vesicles. Regulates membrane lipid diffusion. Required to prevent membrane damage when exposed to low levels of membrane-damaging antibiotics or to bacteriophage. Probably surveys the cell membrane for stress; localizes to sites of membrane damage (treatment with nisin) and forms foci in cells treated with pore-forming compounds (CCCP). May assist membrane repair, possibly by membrane tethering and fusion. Probably functions both in early and late cell division, affects the proper formation of the FtsZ ring. Plays a non-redundant role with flottilin (floT) in membrane dynamics and cell shape. Probably able to bend membranes. Tethers liposomes and mediates their fusion; this does not require GTPase activity or the presence of GTP. Both GTPase domains (dynamin-type G) are required for GTPase activity. Functionally, has intrinsic affinity for membranes and membrane distortion capability; causes tubulation and membrane distortion when expressed in a Drosophila cell line. In Bacillus subtilis (strain 168), this protein is Dynamin-like protein A.